Reading from the N-terminus, the 248-residue chain is Probable transcriptional regulatory protein RPA1097 (248 aa).

The interval 1 to 21 (MAGHSQFKNIMHRKGRQDAQR) is disordered.

Belongs to the TACO1 family.

It is found in the cytoplasm. This is Probable transcriptional regulatory protein RPA1097 from Rhodopseudomonas palustris (strain ATCC BAA-98 / CGA009).